The primary structure comprises 33 residues: Actin (33 aa).

This sequence belongs to the actin family.

Its subcellular location is the cytoplasm. It is found in the cytoskeleton. It catalyses the reaction ATP + H2O = ADP + phosphate + H(+). Actins are highly conserved proteins that are involved in various types of cell motility and are ubiquitously expressed in all eukaryotic cells. The chain is Actin from Dictyocaulus viviparus (Bovine lungworm).